We begin with the raw amino-acid sequence, 197 residues long: Phosphoheptose isomerase (197 aa).

Residues 37–197 (MLQCLMNDGK…CIDSVLLEGM (161 aa)) form the SIS domain. A substrate-binding site is contributed by 52 to 54 (NGG). Positions 61 and 65 each coordinate Zn(2+). Substrate contacts are provided by residues Glu-65, 94–95 (ND), 120–122 (STS), Ser-125, and Gln-175. Zn(2+) contacts are provided by Gln-175 and His-183.

Belongs to the SIS family. GmhA subfamily. As to quaternary structure, homotetramer. Zn(2+) serves as cofactor.

It is found in the cytoplasm. The enzyme catalyses 2 D-sedoheptulose 7-phosphate = D-glycero-alpha-D-manno-heptose 7-phosphate + D-glycero-beta-D-manno-heptose 7-phosphate. It participates in carbohydrate biosynthesis; D-glycero-D-manno-heptose 7-phosphate biosynthesis; D-glycero-alpha-D-manno-heptose 7-phosphate and D-glycero-beta-D-manno-heptose 7-phosphate from sedoheptulose 7-phosphate: step 1/1. Its function is as follows. Catalyzes the isomerization of sedoheptulose 7-phosphate in D-glycero-D-manno-heptose 7-phosphate. This Neisseria meningitidis serogroup C (strain 053442) protein is Phosphoheptose isomerase.